The chain runs to 181 residues: Adenine phosphoribosyltransferase (181 aa).

This sequence belongs to the purine/pyrimidine phosphoribosyltransferase family. As to quaternary structure, homodimer.

It localises to the cytoplasm. It carries out the reaction AMP + diphosphate = 5-phospho-alpha-D-ribose 1-diphosphate + adenine. Its pathway is purine metabolism; AMP biosynthesis via salvage pathway; AMP from adenine: step 1/1. Catalyzes a salvage reaction resulting in the formation of AMP, that is energically less costly than de novo synthesis. The protein is Adenine phosphoribosyltransferase of Pseudoalteromonas translucida (strain TAC 125).